The following is a 185-amino-acid chain: Elongation factor P (185 aa).

It belongs to the elongation factor P family.

It localises to the cytoplasm. It functions in the pathway protein biosynthesis; polypeptide chain elongation. Functionally, involved in peptide bond synthesis. Stimulates efficient translation and peptide-bond synthesis on native or reconstituted 70S ribosomes in vitro. Probably functions indirectly by altering the affinity of the ribosome for aminoacyl-tRNA, thus increasing their reactivity as acceptors for peptidyl transferase. This is Elongation factor P from Clostridium tetani (strain Massachusetts / E88).